Here is a 207-residue protein sequence, read N- to C-terminus: Ras-related protein Rab-8B (207 aa).

Residues serine 17, glycine 18, valine 19, glycine 20, lysine 21, threonine 22, cysteine 23, threonine 35, serine 39, and threonine 40 each coordinate GTP. Threonine 22 contacts Mg(2+). 2 consecutive short sequence motifs (switch) follow at residues 31-45 (DAFN…GIDF) and 63-80 (DTAG…YYRG). The Mg(2+) site is built by threonine 40 and aspartate 63. Glycine 66 serves as a coordination point for GTP. Phosphothreonine is present on threonine 72. GTP is bound by residues asparagine 121, lysine 122, aspartate 124, alanine 152, and lysine 153. Serine 180 carries the phosphoserine modification. Cysteine 204 is modified (cysteine methyl ester). Cysteine 204 carries the S-geranylgeranyl cysteine lipid modification. Positions 205–207 (LLL) are cleaved as a propeptide — removed in mature form.

Belongs to the small GTPase superfamily. Rab family. Associated with actin, delta-catenin and alpha and beta tubulins. Interacts with OTOF. Interacts with PEX5R. Interacts with RAB3IP. Interacts with VIM. Interacts with CDH1. Interacts with MICALL2. Interacts with GDI1, GDI2, CHML and CHM; phosphorylation at Thr-72 disrupts these interactions. Interacts with MICAL1. It depends on Mg(2+) as a cofactor. In terms of processing, phosphorylation of Thr-72 in the switch II region by LRRK2 prevents the association of RAB regulatory proteins, including CHM, CHML and RAB GDP dissociation inhibitors GDI1 and GDI2.

It localises to the cell membrane. The protein resides in the cytoplasmic vesicle. It is found in the phagosome membrane. The protein localises to the endosome membrane. The enzyme catalyses GTP + H2O = GDP + phosphate + H(+). Regulated by guanine nucleotide exchange factors (GEFs) including RAB3IP/RABIN8 which promotes the exchange of bound GDP for free GTP. Regulated by GTPase activating proteins (GAPs) which increase the GTP hydrolysis activity. Inhibited by GDP dissociation inhibitors (GDIs). In terms of biological role, the small GTPases Rab are key regulators of intracellular membrane trafficking, from the formation of transport vesicles to their fusion with membranes. Rabs cycle between an inactive GDP-bound form and an active GTP-bound form that is able to recruit to membranes different sets of downstream effectors directly responsible for vesicle formation, movement, tethering and fusion. RAB8B may be involved in polarized vesicular trafficking and neurotransmitter release. May participate in cell junction dynamics in Sertoli cells. May also participate in the export of a subset of neosynthesized proteins through a Rab8-Rab10-Rab11-dependent endososomal export route. This is Ras-related protein Rab-8B (RAB8B) from Pongo abelii (Sumatran orangutan).